The following is a 441-amino-acid chain: Putative transporter AmpG 1 (441 aa).

Transmembrane regions (helical) follow at residues 5 to 25 (SHLL…MITG), 42 to 62 (IGIL…APIF), 78 to 98 (LSWI…FSFL), 104 to 124 (LVLF…QDTI), 143 to 163 (GIYI…AIYL), 171 to 191 (EIYK…IVAA), 249 to 269 (SGND…LVLY), 297 to 317 (VGKF…GFIM), 325 to 345 (SIFL…FLEI), 352 to 372 (LLFI…TAYI), 390 to 410 (FLSS…GYMV), and 413 to 433 (FGWQ…LLIL).

Belongs to the major facilitator superfamily.

It is found in the cell inner membrane. This Rickettsia felis (strain ATCC VR-1525 / URRWXCal2) (Rickettsia azadi) protein is Putative transporter AmpG 1 (ampG1).